The following is a 434-amino-acid chain: Methyl-coenzyme M reductase subunit beta (434 aa).

Tyr-365 is a binding site for coenzyme M. Gly-367 is a binding site for coenzyme B.

The protein belongs to the methyl-coenzyme M reductase beta subunit family. MCR is a hexamer of two alpha, two beta, and two gamma chains, forming a dimer of heterotrimers. It depends on coenzyme F430 as a cofactor.

It localises to the cytoplasm. It catalyses the reaction coenzyme B + methyl-coenzyme M = methane + coenzyme M-coenzyme B heterodisulfide. Its pathway is one-carbon metabolism; methyl-coenzyme M reduction; methane from methyl-coenzyme M: step 1/1. Functionally, component of the methyl-coenzyme M reductase (MCR) I that catalyzes the reductive cleavage of methyl-coenzyme M (CoM-S-CH3 or 2-(methylthio)ethanesulfonate) using coenzyme B (CoB or 7-mercaptoheptanoylthreonine phosphate) as reductant which results in the production of methane and the mixed heterodisulfide of CoB and CoM (CoM-S-S-CoB). This is the final step in methanogenesis. The sequence is that of Methyl-coenzyme M reductase subunit beta (mcrB) from Methanosarcina barkeri (strain Fusaro / DSM 804).